Consider the following 150-residue polypeptide: Histone H2A.1 (150 aa).

Residue Met-1 is modified to N-acetylmethionine. Basic residues-rich tracts occupy residues 1–24 (MDASTKTKKGAGGRKGGGPRKKSV) and 141–150 (SKAKKSPKKA). Disordered stretches follow at residues 1–26 (MDASTKTKKGAGGRKGGGPRKKSVTR) and 128–150 (RKENAAASTPKSPSKAKKSPKKA). 2 short sequence motifs (SPKK motif) span residues 139-142 (SPSK) and 146-149 (SPKK).

It belongs to the histone H2A family. As to quaternary structure, the nucleosome is a histone octamer containing two molecules each of H2A, H2B, H3 and H4 assembled in one H3-H4 heterotetramer and two H2A-H2B heterodimers. The octamer wraps approximately 147 bp of DNA. High expression in root meristematic tissues, moderate in whole shoot and very low in mature leaves.

Its subcellular location is the nucleus. The protein localises to the chromosome. Its function is as follows. Core component of nucleosome. Nucleosomes wrap and compact DNA into chromatin, limiting DNA accessibility to the cellular machineries which require DNA as a template. Histones thereby play a central role in transcription regulation, DNA repair, DNA replication and chromosomal stability. DNA accessibility is regulated via a complex set of post-translational modifications of histones, also called histone code, and nucleosome remodeling. This is Histone H2A.1 from Pisum sativum (Garden pea).